The following is a 247-amino-acid chain: UPF0273 protein PF1931 (247 aa).

Residues 3–247 (RRVKTGIPGM…VLKRGRIYEL (245 aa)) form the KaiC domain. 30–37 (GGPGTGKS) contributes to the ATP binding site.

It belongs to the UPF0273 family.

The sequence is that of UPF0273 protein PF1931 from Pyrococcus furiosus (strain ATCC 43587 / DSM 3638 / JCM 8422 / Vc1).